Consider the following 203-residue polypeptide: ATP-dependent Clp protease proteolytic subunit 2 (203 aa).

Ser-98 functions as the Nucleophile in the catalytic mechanism. His-123 is a catalytic residue.

Belongs to the peptidase S14 family. In terms of assembly, fourteen ClpP subunits assemble into 2 heptameric rings which stack back to back to give a disk-like structure with a central cavity, resembling the structure of eukaryotic proteasomes.

It is found in the cytoplasm. The enzyme catalyses Hydrolysis of proteins to small peptides in the presence of ATP and magnesium. alpha-casein is the usual test substrate. In the absence of ATP, only oligopeptides shorter than five residues are hydrolyzed (such as succinyl-Leu-Tyr-|-NHMec, and Leu-Tyr-Leu-|-Tyr-Trp, in which cleavage of the -Tyr-|-Leu- and -Tyr-|-Trp bonds also occurs).. Functionally, cleaves peptides in various proteins in a process that requires ATP hydrolysis. Has a chymotrypsin-like activity. Plays a major role in the degradation of misfolded proteins. This chain is ATP-dependent Clp protease proteolytic subunit 2, found in Chlamydia muridarum (strain MoPn / Nigg).